The sequence spans 315 residues: Rhomboid-related protein 4 (315 aa).

At 1 to 21 the chain is on the cytoplasmic side; that stretch reads MQRRTRGINTGLLLLLSQVFQ. A helical membrane pass occupies residues 22-42; that stretch reads IGINNIPPVTLATLAVNVWFF. Over 43-103 the chain is Lumenal; the sequence is LNPWKPLYHS…KLERRLGSRW (61 aa). A helical membrane pass occupies residues 104–124; it reads FAYVIATFSLLTGVVYLLLQF. Residues 125-137 lie on the Cytoplasmic side of the membrane; that stretch reads TVAELLNQPDFKR. A helical transmembrane segment spans residues 138 to 154; that stretch reads NCAVGFSGVLFALKVLS. The Nucleophile role is filled by Ser-144. At 155–180 the chain is on the lumenal side; sequence NHYCPGGFVNILGFPVPNRFACWAEL. Residues 181 to 201 traverse the membrane as a helical segment; sequence VAIHFCTPGTSFAGHLAGILV. The active site involves His-195. The Cytoplasmic segment spans residues 202 to 315; it reads GLMYTQGPLK…RQRLHRFDGQ (114 aa). The ubiquitin-binding domain (UBD) stretch occupies residues 269–284; it reads SEEEQLERALRASIWD. The segment at 301-315 is VCP/p97-interacting motif (VIM); the sequence is PEEMRRQRLHRFDGQ.

This sequence belongs to the peptidase S54 family. As to quaternary structure, interacts with BIK and STEAP3. Interacts (via C-terminal domain) with VCP/P97. Interacts with ubiquitin and ubiquitinated proteins. As to expression, expressed in testis (at protein level). Expressed in intestine, lung, brain, kidney, epididymis, stomach, muscle, spleen, liver, heart and testis.

It is found in the endoplasmic reticulum membrane. It localises to the mitochondrion membrane. The enzyme catalyses Cleaves type-1 transmembrane domains using a catalytic dyad composed of serine and histidine that are contributed by different transmembrane domains.. Inhibited by aprotinin. In terms of biological role, intramembrane-cleaving serine protease that cleaves single transmembrane or multi-pass membrane proteins in the hydrophobic plane of the membrane, luminal loops and juxtamembrane regions. Involved in regulated intramembrane proteolysis and the subsequent release of functional polypeptides from their membrane anchors. Functional component of endoplasmic reticulum-associated degradation (ERAD) for misfolded membrane proteins. Required for the degradation process of some specific misfolded endoplasmic reticulum (ER) luminal proteins. Participates in the transfer of misfolded proteins from the ER to the cytosol, where they are destroyed by the proteasome in a ubiquitin-dependent manner. Functions in BIK, MPZ, PKD1, PTCRA, RHO, STEAP3 and TRAC processing. Involved in the regulation of exosomal secretion; inhibits the TSAP6-mediated secretion pathway. Involved in the regulation of apoptosis; modulates BIK-mediated apoptotic activity. Also plays a role in the regulation of spermatogenesis; inhibits apoptotic activity in spermatogonia. The protein is Rhomboid-related protein 4 (Rhbdd1) of Mus musculus (Mouse).